The chain runs to 666 residues: Long chain acyl-CoA synthetase 5 (666 aa).

Residue 228-239 participates in ATP binding; the sequence is IMYTSGTTGDPK. Positions 495 to 519 are fatty acid-binding; it reads DGWLHTGDVGEWQPNGSMKIIDRKK.

This sequence belongs to the ATP-dependent AMP-binding enzyme family. The cofactor is Mg(2+).

The catalysed reaction is a long-chain fatty acid + ATP + CoA = a long-chain fatty acyl-CoA + AMP + diphosphate. It participates in lipid metabolism; fatty acid metabolism. Activation of long-chain fatty acids for both synthesis of cellular lipids, and degradation via beta-oxidation. Preferentially uses palmitate, palmitoleate, oleate and linoleate. This Arabidopsis thaliana (Mouse-ear cress) protein is Long chain acyl-CoA synthetase 5 (LACS5).